Consider the following 320-residue polypeptide: Short-chain dehydrogenase TIC 32 B, chloroplastic (320 aa).

NADP(+) is bound by residues glycine 40–glycine 46, aspartate 92–leucine 93, asparagine 119, and threonine 140. Serine 174 provides a ligand contact to substrate. Tyrosine 196 acts as the Proton acceptor in catalysis. The segment at aspartate 301–aspartate 317 is interaction with calmodulin.

The protein belongs to the short-chain dehydrogenases/reductases (SDR) family. As to quaternary structure, part of the Tic complex.

The protein localises to the plastid. Its subcellular location is the chloroplast inner membrane. In terms of biological role, involved in protein precursor import into chloroplasts. This Brassica napus (Rape) protein is Short-chain dehydrogenase TIC 32 B, chloroplastic.